A 1232-amino-acid chain; its full sequence is Pyruvate:ferredoxin oxidoreductase (1232 aa).

Residue Thr31 coordinates pyruvate. Position 64 (Glu64) interacts with thiamine diphosphate. Arg114 provides a ligand contact to pyruvate. Residues 427-431 (ADGTV), Lys459, Asn560, and Asn602 contribute to the CoA site. 2 4Fe-4S ferredoxin-type domains span residues 680–709 (NVPQWVPENCIQCNQCAFVCPHSAILPVLA) and 736–767 (FRIQINTLDCMGCGNCADICPPKEKALVMQPL). 10 residues coordinate [4Fe-4S] cluster: Cys689, Cys692, Cys695, Cys699, Cys745, Cys748, Cys751, Cys755, Cys812, and Cys815. Residues Glu817, Cys840, and 962–965 (GDGW) each bind thiamine diphosphate. A [4Fe-4S] cluster-binding site is contributed by Cys840. Asp963 contributes to the Mg(2+) binding site. Asp983 and Asn985 together coordinate Ca(2+). Positions 991 and 993 each coordinate Mg(2+). 991–996 (TEVYSN) contributes to the thiamine diphosphate binding site. Residues Ala1056, Phe1059, Gly1061, and Ser1063 each contribute to the Ca(2+) site. Cys1071 is a binding site for [4Fe-4S] cluster. Cys1195 and Cys1212 form a disulfide bridge. Residues 1197 to 1232 (RDDTPMMARPDSGEACDQNRAGTSEQQGDLSKRTKK) are disordered. Positions 1216–1225 (RAGTSEQQGD) are enriched in polar residues.

The protein belongs to the pyruvate:ferredoxin/flavodoxin oxidoreductase family. As to quaternary structure, homodimer. Requires [4Fe-4S] cluster as cofactor. It depends on thiamine diphosphate as a cofactor. Mg(2+) serves as cofactor.

It localises to the cytoplasm. The catalysed reaction is 2 oxidized [2Fe-2S]-[ferredoxin] + pyruvate + CoA = 2 reduced [2Fe-2S]-[ferredoxin] + acetyl-CoA + CO2 + H(+). Functionally, catalyzes the ferredoxin-dependent oxidative decarboxylation of pyruvate. Required for the transfer of electrons from pyruvate to ferredoxin. Ferredoxin I and ferredoxin II, which are single 4Fe-4S cluster ferredoxins are the most effective electron carriers of POR. In Desulfocurvibacter africanus (Desulfovibrio africanus), this protein is Pyruvate:ferredoxin oxidoreductase.